The following is a 95-amino-acid chain: Pyruvate dehydrogenase inhibitor (95 aa).

The protein belongs to the HesB/IscA family. Interacts with the E1 module of pyruvate dehydrogenase (PdhA-PdhB).

In terms of biological role, acts as an inhibitor of the pyruvate dehydrogenase. Overexpression does not affect growth with glucose as the main carbon source, but it leads to a dramatic growth defect when cells are grown with pyruvate as the sole carbon source. The polypeptide is Pyruvate dehydrogenase inhibitor (Bacillus subtilis (strain 168)).